The chain runs to 731 residues: Golgin subfamily A member 5 (731 aa).

Position 2 is an N-acetylserine (Ser-2). The Cytoplasmic segment spans residues 2 to 698; that stretch reads SWFVDLAGKA…IFLRRYPIAR (697 aa). Arg-89 carries the dimethylated arginine modification. The segment at 93 to 222 is disordered; that stretch reads EASHPVENAS…PTPNDDGKSH (130 aa). A Phosphoserine modification is found at Ser-116. The segment covering 134 to 146 has biased composition (basic and acidic residues); that stretch reads PTGRVEIRKEKGK. Low complexity predominate over residues 147 to 167; the sequence is TPVFQSSQTSSVSSVNPSVTT. Polar residues predominate over residues 173 to 188; sequence ENSFGSQTHEAASNSD. The span at 189-199 shows a compositional bias: basic and acidic residues; it reads SSHEGQEESSK. A coiled-coil region spans residues 216–632; it reads NDDGKSHELS…EQQMNSASGS (417 aa). A helical; Anchor for type IV membrane protein membrane pass occupies residues 699–719; the sequence is VFVIIYMALLHLWVMIVLLTY. The Lumenal portion of the chain corresponds to 720 to 731; the sequence is TPEMHHDQPYGK.

In terms of assembly, homodimer. Interacts with RAB1A that has been activated by GTP-binding, and possibly also with OCRL1. Interacts with isoform CASP of CUX1. In terms of processing, highly phosphorylated during mitosis. Phosphorylation is barely detectable during interphase. As to expression, ubiquitous. Highly expressed in seminiferous tubules and Leydig cells in testis, and detected at much lower levels in the other tissues tested. Expression is very low or not detectable in spermatozoa.

The protein resides in the golgi apparatus membrane. Involved in maintaining Golgi structure. Stimulates the formation of Golgi stacks and ribbons. Involved in intra-Golgi retrograde transport. This Homo sapiens (Human) protein is Golgin subfamily A member 5 (GOLGA5).